The primary structure comprises 373 residues: MSDNSKTRVVVGMSGGVDSSVTALLLKEQGYDVIGIFMKNWDDTDENGVCTATEDYKDVVAVADQIGIPYYSVNFEKEYWDRVFEYXXAEYRAGRTPNPDVMCNKEIKFKAFLDYAMTLGADYVATGHYARVARDEDGTVHMLRGVDNGKDQTYFLSQLSQEQLQKTMFPLGHLEKPEVRKLAEEAGLSTAKKKDSTGICFIGEKNFKNFLSNYLPAQPGRMMTVDGRDMGEHAGLMYYTIGQRGGLGIGGQHGGDNAPWFVVGKDLSKNILYVGQGFYHDSLMSTSLEASQVHFTREMPEEFTLECTAKFRYRQPDSKVTVHVKGDKAEVIFAEPQRAITPGQAVVFYDGEECLGGGLIDNAYRDGQVCQYI.

Residues 12-19 (GMSGGVDS) and Met-38 each bind ATP. The segment at 98–100 (NPD) is interaction with target base in tRNA. Cys-103 acts as the Nucleophile in catalysis. Residues Cys-103 and Cys-200 are joined by a disulfide bond. Gly-127 is a binding site for ATP. An interaction with tRNA region spans residues 150–152 (KDQ). The active-site Cysteine persulfide intermediate is Cys-200. Residues 312 to 313 (RY) form an interaction with tRNA region.

The protein belongs to the MnmA/TRMU family.

The protein resides in the cytoplasm. The catalysed reaction is S-sulfanyl-L-cysteinyl-[protein] + uridine(34) in tRNA + AH2 + ATP = 2-thiouridine(34) in tRNA + L-cysteinyl-[protein] + A + AMP + diphosphate + H(+). In terms of biological role, catalyzes the 2-thiolation of uridine at the wobble position (U34) of tRNA, leading to the formation of s(2)U34. This chain is tRNA-specific 2-thiouridylase MnmA, found in Streptococcus pneumoniae serotype 19F (strain G54).